A 575-amino-acid chain; its full sequence is MGSSLDLVASFSHDSTRFAFQASVAQKNNVDIYPLNETKDYVVNSSLVSHIDYETNDMKVSDVIFFGWCSDLIDTQSSNIKRKLDEDEGTGESSEQRCENFFVNGFPDGRIVVYSSNGKDIVNIIKNKKEILGADTDESDIWILDSDKVVKKLQYNNSKPLKTFTLVDGKDDEIVHFQILHQNGTLLVCIITKQMVYIVDPSKRRPSTKYSFEISDAVACEFSSDGKYLLIANNEELIAYDLKEDSKLIQSWPVQVKTLKTLDDLIMALTTDGKINNYKIGEADKVCSIVVNEDLEIIDFTPINSKQQVLISWLNVNEPNFESISLKEIETQGYITINKNEKNNADEADQKKLEEKEEEAQPEVQHEKKETETKINKKVSKSDQVEIANILSSHLEANSTEILDDLMSGSWTEPEIKKFILTKINTVDHLSKIFLTISKSITQNPWNEENLLPLWLKWLLTLKSGELNSIKDKHTKKNCKHLKSALRSSEEILPVLLGIQGRLEMLRRQAKLREDLAQLSMQEGEDDEIEVIEHSNVISNPLQDQASPVEKLEPDSIVYANGESDEFVDASEYKD.

Composition is skewed to basic and acidic residues over residues 340 to 355 (NEKNNADEADQKKLEE) and 364 to 375 (VQHEKKETETKI). The segment at 340 to 375 (NEKNNADEADQKKLEEKEEEAQPEVQHEKKETETKI) is disordered. A phosphoserine mark is found at Ser547 and Ser564.

Interacts with snoRNA U3. Interacts with MPP10. Component of the ribosomal small subunit (SSU) processome composed of at least 40 protein subunits and snoRNA U3. In the absence of snoRNA3, forms a complex with other t-UTPs. This complex can associate with pre-18S ribosomal RNAs.

Its subcellular location is the nucleus. The protein localises to the nucleolus. Functionally, involved in nucleolar processing of pre-18S ribosomal RNA. Required for optimal pre-ribosomal RNA transcription by RNA polymerase I together with a subset of U3 proteins required for transcription (t-UTPs). In Saccharomyces cerevisiae (strain ATCC 204508 / S288c) (Baker's yeast), this protein is U3 small nucleolar RNA-associated protein 9 (UTP9).